The following is a 759-amino-acid chain: Phosphoribosylformylglycinamidine synthase subunit PurL (759 aa).

The active site involves His46. ATP-binding residues include Tyr49 and Lys88. Glu90 contacts Mg(2+). Residues 91–94 (SHNH) and Arg113 contribute to the substrate site. His92 functions as the Proton acceptor in the catalytic mechanism. Asp114 is a Mg(2+) binding site. Residue Gln237 participates in substrate binding. Asp265 is a Mg(2+) binding site. 309 to 311 (ESQ) lines the substrate pocket. ATP contacts are provided by Asp498 and Gly535. Asn536 is a binding site for Mg(2+). Ser538 serves as a coordination point for substrate.

It belongs to the FGAMS family. As to quaternary structure, monomer. Part of the FGAM synthase complex composed of 1 PurL, 1 PurQ and 2 PurS subunits.

The protein localises to the cytoplasm. The enzyme catalyses N(2)-formyl-N(1)-(5-phospho-beta-D-ribosyl)glycinamide + L-glutamine + ATP + H2O = 2-formamido-N(1)-(5-O-phospho-beta-D-ribosyl)acetamidine + L-glutamate + ADP + phosphate + H(+). It functions in the pathway purine metabolism; IMP biosynthesis via de novo pathway; 5-amino-1-(5-phospho-D-ribosyl)imidazole from N(2)-formyl-N(1)-(5-phospho-D-ribosyl)glycinamide: step 1/2. Its function is as follows. Part of the phosphoribosylformylglycinamidine synthase complex involved in the purines biosynthetic pathway. Catalyzes the ATP-dependent conversion of formylglycinamide ribonucleotide (FGAR) and glutamine to yield formylglycinamidine ribonucleotide (FGAM) and glutamate. The FGAM synthase complex is composed of three subunits. PurQ produces an ammonia molecule by converting glutamine to glutamate. PurL transfers the ammonia molecule to FGAR to form FGAM in an ATP-dependent manner. PurS interacts with PurQ and PurL and is thought to assist in the transfer of the ammonia molecule from PurQ to PurL. The chain is Phosphoribosylformylglycinamidine synthase subunit PurL from Anaeromyxobacter dehalogenans (strain 2CP-1 / ATCC BAA-258).